Here is a 249-residue protein sequence, read N- to C-terminus: Proteasome subunit alpha type-3 (249 aa).

At Ser-2 the chain carries N-acetylserine. An O-acetylserine mark is found at Ser-214 and Ser-220. Lys-221 is covalently cross-linked (Glycyl lysine isopeptide (Lys-Gly) (interchain with G-Cter in ubiquitin)).

The protein belongs to the peptidase T1A family. As to quaternary structure, component of the 20S core complex of the 26S proteasome. The 26S proteasome is composed of a core protease (CP), known as the 20S proteasome, capped at one or both ends by the 19S regulatory particle (RP/PA700). The 20S proteasome core is composed of 28 subunits that are arranged in four stacked rings, resulting in a barrel-shaped structure. The two end rings are each formed by seven alpha subunits, and the two central rings are each formed by seven beta subunits. The catalytic chamber with the active sites is on the inside of the barrel. In terms of tissue distribution, ubiquitous low levels.

It is found in the cytoplasm. It localises to the nucleus. The proteasome is a multicatalytic proteinase complex which is characterized by its ability to cleave peptides with Arg, Phe, Tyr, Leu, and Glu adjacent to the leaving group at neutral or slightly basic pH. The proteasome has an ATP-dependent proteolytic activity. This chain is Proteasome subunit alpha type-3 (PAG1), found in Arabidopsis thaliana (Mouse-ear cress).